The chain runs to 440 residues: Argininosuccinate lyase (440 aa).

It belongs to the lyase 1 family. Argininosuccinate lyase subfamily.

Its subcellular location is the cytoplasm. It catalyses the reaction 2-(N(omega)-L-arginino)succinate = fumarate + L-arginine. It participates in amino-acid biosynthesis; L-arginine biosynthesis; L-arginine from L-ornithine and carbamoyl phosphate: step 3/3. This Clostridium botulinum (strain ATCC 19397 / Type A) protein is Argininosuccinate lyase.